Reading from the N-terminus, the 471-residue chain is PTS system mannitol-specific EIICB component (471 aa).

Residues 1-29 (MTHTSENQAGFRVKIQRFGSYLSGMIMPN) are Cytoplasmic-facing. Residues 18-342 (FGSYLSGMIM…FFVASIFLKS (325 aa)) enclose the PTS EIIC type-2 domain. Residues 30–51 (IGAFIAWGIITALFIPTGWLPN) form a helical membrane-spanning segment. Residues 52 to 55 (ETFA) lie on the Extracellular side of the membrane. The chain crosses the membrane as a helical span at residues 56–76 (KLVGPMITYLLPLLIGYTGGK). Topologically, residues 77–139 (MIYDVRGGVV…QGFEMLVNNF (63 aa)) are cytoplasmic. The helical transmembrane segment at 140–161 (SAGIIGGLLTLAAFKGVGPVVS) threads the bilayer. The Extracellular portion of the chain corresponds to 162–170 (AISKTLAAG). Residues 171-191 (VEKIVDLHLLPLANIFIEPGK) traverse the membrane as a helical segment. Over 192–278 (VLFLNNAINH…VLMRPILILA (87 aa)) the chain is Cytoplasmic. Residues 279–298 (AIAGGVSGVLTFTIFDAGLV) form a helical membrane-spanning segment. At 299-318 (AVPSPGSIFALLAMTPKGNY) the chain is on the extracellular side. Residues 319–340 (LGVLAGVLVATAVSFFVASIFL) traverse the membrane as a helical segment. Residues 341-471 (KSAKNNEEDI…YDELIEMLKK (131 aa)) lie on the Cytoplasmic side of the membrane. The PTS EIIB type-2 domain occupies 383–471 (KKIVFACDAG…YDELIEMLKK (89 aa)). Cys-389 functions as the Phosphocysteine intermediate; for EIIB activity in the catalytic mechanism. Cys-389 is subject to Phosphocysteine; by EIIA.

In terms of assembly, homodimer.

The protein localises to the cell membrane. The catalysed reaction is D-mannitol(out) + N(pros)-phospho-L-histidyl-[protein] = D-mannitol 1-phosphate(in) + L-histidyl-[protein]. Functionally, the phosphoenolpyruvate-dependent sugar phosphotransferase system (sugar PTS), a major carbohydrate active transport system, catalyzes the phosphorylation of incoming sugar substrates concomitantly with their translocation across the cell membrane. The enzyme II CmtAB PTS system is involved in D-mannitol transport. This is PTS system mannitol-specific EIICB component from Geobacillus stearothermophilus (Bacillus stearothermophilus).